A 476-amino-acid polypeptide reads, in one-letter code: Glutamyl-tRNA(Gln) amidotransferase subunit A (476 aa).

Residues K76 and S151 each act as charge relay system in the active site. S175 functions as the Acyl-ester intermediate in the catalytic mechanism.

It belongs to the amidase family. GatA subfamily. Heterotrimer of A, B and C subunits.

The catalysed reaction is L-glutamyl-tRNA(Gln) + L-glutamine + ATP + H2O = L-glutaminyl-tRNA(Gln) + L-glutamate + ADP + phosphate + H(+). Its function is as follows. Allows the formation of correctly charged Gln-tRNA(Gln) through the transamidation of misacylated Glu-tRNA(Gln) in organisms which lack glutaminyl-tRNA synthetase. The reaction takes place in the presence of glutamine and ATP through an activated gamma-phospho-Glu-tRNA(Gln). In Chlorobium phaeobacteroides (strain DSM 266 / SMG 266 / 2430), this protein is Glutamyl-tRNA(Gln) amidotransferase subunit A.